The primary structure comprises 111 residues: Probable 4-amino-4-deoxy-L-arabinose-phosphoundecaprenol flippase subunit ArnE (111 aa).

Residues Met1 to His35 lie on the Cytoplasmic side of the membrane. Residues Ile36–Leu56 form a helical membrane-spanning segment. Positions Leu40 to Ser109 constitute an EamA domain. Over Val57–Asn60 the chain is Periplasmic. A helical transmembrane segment spans residues Val61–Ala81. The Cytoplasmic portion of the chain corresponds to Val82 to Glu87. A helical transmembrane segment spans residues Pro88–Gly108. Topologically, residues Ser109 to Val111 are periplasmic.

Belongs to the ArnE family. As to quaternary structure, heterodimer of ArnE and ArnF.

The protein resides in the cell inner membrane. It participates in bacterial outer membrane biogenesis; lipopolysaccharide biosynthesis. Its function is as follows. Translocates 4-amino-4-deoxy-L-arabinose-phosphoundecaprenol (alpha-L-Ara4N-phosphoundecaprenol) from the cytoplasmic to the periplasmic side of the inner membrane. The sequence is that of Probable 4-amino-4-deoxy-L-arabinose-phosphoundecaprenol flippase subunit ArnE from Escherichia coli (strain UTI89 / UPEC).